Consider the following 730-residue polypeptide: MSKQVFETIFAGKKLAVEIGQVAKQANGAALVRYGDSTVLSAAVMSKKMSTGDFFPLQINYEEKRYAAGKFPGGFNKREGRPSTDATLTARLIDRPIRPMFAEGFRNEVQVINTVLSYDADASAPMAAMFGSSLALSISDIPFNGPIAGVQVAYLDGQYVINPTAEEKKASLLELTVAGTKEAINMVESGAKELSEDIMLEALLKGHEAVRELIAFQEEIIAAVGKEKAEVELLQVDADLQAEIVGKYNADLQKAVQIEEKKAREIATEAVKEHVTAEYEERYAEHEEHDRIMRDVAEILEQMEHAEVRRLITEDKVRPDGRRVDEIRPLDAEIDFLPKVHGSGLFTRGQTQALSVLTLAPMGDTQIVDGLDEEYKKRFMHHYNFPQYSVGETGRYGAPGRREIGHGALGERALAQVLPSLEAFPYAIRLVAEVLESNGSSSQASICAGTLALMAGGVPIKAPVAGIAMGLISDGTNYTVLTDIQGLEDHFGDMDFKVAGTREGITALQMDIKIEGITPQILEEALAQAKKARFEILDVIEKVIPAPRLELAPTAPKIDTIKVDVDKIKIVIGKGGETIDKIIEETGVKIDIDEDGNIAIYSSDQEAINRTKEIIASLVREAKVGEIYEAEVVRIEKFGAFVHLFDKTDALVHISEIAWTRTNKVEDVLAVGDKVTVKVVKVDDKGRIDASMKALLPRPPRSEKSNKEDHQSVRHHGSPKDDKGKEKYDK.

Residues Asp489 and Asp495 each contribute to the Mg(2+) site. The region spanning 556–615 is the KH domain; the sequence is PKIDTIKVDVDKIKIVIGKGGETIDKIIEETGVKIDIDEDGNIAIYSSDQEAINRTKEII. One can recognise an S1 motif domain in the interval 625–693; that stretch reads GEIYEAEVVR…DKGRIDASMK (69 aa). A disordered region spans residues 691–730; the sequence is SMKALLPRPPRSEKSNKEDHQSVRHHGSPKDDKGKEKYDK. Basic and acidic residues predominate over residues 700-730; the sequence is PRSEKSNKEDHQSVRHHGSPKDDKGKEKYDK.

The protein belongs to the polyribonucleotide nucleotidyltransferase family. The cofactor is Mg(2+).

It localises to the cytoplasm. The catalysed reaction is RNA(n+1) + phosphate = RNA(n) + a ribonucleoside 5'-diphosphate. Its function is as follows. Involved in mRNA degradation. Catalyzes the phosphorolysis of single-stranded polyribonucleotides processively in the 3'- to 5'-direction. The protein is Polyribonucleotide nucleotidyltransferase of Streptococcus mutans serotype c (strain ATCC 700610 / UA159).